A 145-amino-acid polypeptide reads, in one-letter code: Cytochrome c550 (145 aa).

A signal peptide spans 1-24 (MNKNNVLRGLLVLAGLSLSSLALA). One can recognise a Cytochrome c domain in the interval 60–142 (LAVEIGASAY…AIRSYLESVH (83 aa)). 4 residues coordinate heme c: Cys-73, Cys-76, His-77, and Met-119.

As to quaternary structure, monomer. Interacts with the quinoprotein ethanol dehydrogenase (QEDH) ExaA. In terms of processing, binds 1 heme group per subunit.

It is found in the periplasm. It participates in alcohol metabolism; ethanol degradation; acetate from ethanol. Is an essential component of the ethanol oxidation system that allows P.aeruginosa to grow on ethanol as the sole carbon and energy source. Is the direct electron acceptor of the quinoprotein ethanol dehydrogenase (QEDH). The protein is Cytochrome c550 of Pseudomonas aeruginosa (strain ATCC 15692 / DSM 22644 / CIP 104116 / JCM 14847 / LMG 12228 / 1C / PRS 101 / PAO1).